The following is a 347-amino-acid chain: Quinolinate synthase (347 aa).

Iminosuccinate contacts are provided by H47 and S68. Position 113 (C113) interacts with [4Fe-4S] cluster. Iminosuccinate is bound by residues 139-141 and S156; that span reads YAN. C200 provides a ligand contact to [4Fe-4S] cluster. Iminosuccinate is bound by residues 226–228 and T243; that span reads HPE. C297 contacts [4Fe-4S] cluster.

The protein belongs to the quinolinate synthase family. Type 1 subfamily. The cofactor is [4Fe-4S] cluster.

The protein resides in the cytoplasm. It carries out the reaction iminosuccinate + dihydroxyacetone phosphate = quinolinate + phosphate + 2 H2O + H(+). It participates in cofactor biosynthesis; NAD(+) biosynthesis; quinolinate from iminoaspartate: step 1/1. Its function is as follows. Catalyzes the condensation of iminoaspartate with dihydroxyacetone phosphate to form quinolinate. The sequence is that of Quinolinate synthase from Shigella flexneri serotype 5b (strain 8401).